A 202-amino-acid polypeptide reads, in one-letter code: Josephin-1 (202 aa).

Ser-15 is modified (phosphoserine). One can recognise a Josephin domain in the interval 23–202 (PPQIYHEKQR…EAHQSWRTDV (180 aa)). Cys-36 acts as the Nucleophile in catalysis. His-139 acts as the Proton acceptor in catalysis.

In terms of assembly, interacts with beta-actin/ACTB. In terms of processing, monoubiquitinated. Ubiquitination activates deubiquitination activity in vitro.

Its subcellular location is the cell membrane. The protein resides in the cytoplasm. The enzyme catalyses Thiol-dependent hydrolysis of ester, thioester, amide, peptide and isopeptide bonds formed by the C-terminal Gly of ubiquitin (a 76-residue protein attached to proteins as an intracellular targeting signal).. Functionally, deubiquitinates monoubiquitinated probes (in vitro). When ubiquitinated, cleaves 'Lys-63'-linked and 'Lys-48'-linked poly-ubiquitin chains (in vitro), hence may act as a deubiquitinating enzyme. May increase macropinocytosis and suppress clathrin- and caveolae-mediated endocytosis. May enhance membrane dynamics and cell motility independently of its catalytic activity. The protein is Josephin-1 (JOSD1) of Pongo abelii (Sumatran orangutan).